The sequence spans 134 residues: Putative nickel-responsive regulator (134 aa).

Positions 78, 89, 91, and 97 each coordinate Ni(2+).

The protein belongs to the transcriptional regulatory CopG/NikR family. The cofactor is Ni(2+).

Transcriptional regulator. The chain is Putative nickel-responsive regulator from Chlorobium phaeobacteroides (strain DSM 266 / SMG 266 / 2430).